The primary structure comprises 95 residues: Large ribosomal subunit protein bL28 (95 aa).

It belongs to the bacterial ribosomal protein bL28 family.

The polypeptide is Large ribosomal subunit protein bL28 (Orientia tsutsugamushi (strain Ikeda) (Rickettsia tsutsugamushi)).